The following is a 91-amino-acid chain: Cytochrome b-c1 complex subunit 6, mitochondrial (91 aa).

A compositionally biased stretch (basic and acidic residues) spans 1 to 10 (MGLEDERKML). The N-terminal 13 residues, 1–13 (MGLEDERKMLTES), are a transit peptide targeting the mitochondrion. The tract at residues 1 to 30 (MGLEDERKMLTESGDPEKEEEEEEELVDPL) is disordered. Positions 17 to 27 (EKEEEEEEELV) are enriched in acidic residues. 2 disulfides stabilise this stretch: Cys37–Cys81 and Cys53–Cys67. The residue at position 42 (Lys42) is an N6-acetyllysine. Lys85 carries the post-translational modification N6-acetyllysine.

The protein belongs to the UQCRH/QCR6 family. In terms of assembly, component of the ubiquinol-cytochrome c oxidoreductase (cytochrome b-c1 complex, complex III, CIII), a multisubunit enzyme composed of 11 subunits. The complex is composed of 3 respiratory subunits cytochrome b, cytochrome c1 and Rieske protein UQCRFS1, 2 core protein subunits UQCRC1/QCR1 and UQCRC2/QCR2, and 6 low-molecular weight protein subunits UQCRH/QCR6, UQCRB/QCR7, UQCRQ/QCR8, UQCR10/QCR9, UQCR11/QCR10 and subunit 9, the cleavage product of Rieske protein UQCRFS1. The complex exists as an obligatory dimer and forms supercomplexes (SCs) in the inner mitochondrial membrane with NADH-ubiquinone oxidoreductase (complex I, CI) and cytochrome c oxidase (complex IV, CIV), resulting in different assemblies (supercomplex SCI(1)III(2)IV(1) and megacomplex MCI(2)III(2)IV(2)).

It localises to the mitochondrion inner membrane. In terms of biological role, component of the ubiquinol-cytochrome c oxidoreductase, a multisubunit transmembrane complex that is part of the mitochondrial electron transport chain which drives oxidative phosphorylation. The respiratory chain contains 3 multisubunit complexes succinate dehydrogenase (complex II, CII), ubiquinol-cytochrome c oxidoreductase (cytochrome b-c1 complex, complex III, CIII) and cytochrome c oxidase (complex IV, CIV), that cooperate to transfer electrons derived from NADH and succinate to molecular oxygen, creating an electrochemical gradient over the inner membrane that drives transmembrane transport and the ATP synthase. The cytochrome b-c1 complex catalyzes electron transfer from ubiquinol to cytochrome c, linking this redox reaction to translocation of protons across the mitochondrial inner membrane, with protons being carried across the membrane as hydrogens on the quinol. In the process called Q cycle, 2 protons are consumed from the matrix, 4 protons are released into the intermembrane space and 2 electrons are passed to cytochrome c. The protein is Cytochrome b-c1 complex subunit 6, mitochondrial (UQCRH) of Macaca fascicularis (Crab-eating macaque).